We begin with the raw amino-acid sequence, 62 residues long: Short neurotoxin 3 (62 aa).

4 disulfides stabilise this stretch: C3-C24, C17-C41, C43-C54, and C55-C60.

Belongs to the three-finger toxin family. Short-chain subfamily. Type I alpha-neurotoxin sub-subfamily. Expressed by the venom gland.

The protein resides in the secreted. Binds to muscle nicotinic acetylcholine receptor (nAChR) and inhibit acetylcholine from binding to the receptor, thereby impairing neuromuscular transmission. The sequence is that of Short neurotoxin 3 from Naja mossambica (Mozambique spitting cobra).